A 2326-amino-acid polypeptide reads, in one-letter code: Chondroitin sulfate proteoglycan 4 (2326 aa).

The first 29 residues, 1 to 29, serve as a signal peptide directing secretion; that stretch reads MLLSPGHPLSAPALALILTLALLVRSTAP. Laminin G-like domains lie at 30-193 and 203-381; these read ASFF…HEGC and VGLG…AAGC. The interval 30-640 is globular or compact configuration stabilized by disulfide bonds; the sequence is ASFFGENHLE…HRGGPAQDLT (611 aa). The tract at residues 30–640 is neurite growth inhibition; the sequence is ASFFGENHLE…HRGGPAQDLT (611 aa). Residues 30–2225 are Extracellular-facing; sequence ASFFGENHLE…SGFLGFLEAN (2196 aa). N-linked (GlcNAc...) asparagine glycosylation is present at Asn-130. Cys-170 and Cys-193 form a disulfide bridge. N-linked (GlcNAc...) asparagine glycosylation is present at Asn-349. A disulfide bridge connects residues Cys-355 and Cys-381. Asn-428 is a glycosylation site (N-linked (GlcNAc...) asparagine). CSPG repeat units lie at residues 429–524, 554–646, and 663–765; these read FTQL…LEVS, PRIV…VSDG, and AIQI…LEVQ. The interval 575–1044 is interaction with COL6A2; that stretch reads GPEIFQAYDP…RGGQRLLTTD (470 aa). Positions 632 to 1450 are interaction with COL5A1; it reads RGGPAQDLTF…SETQTDGFIL (819 aa). 2 N-linked (GlcNAc...) asparagine glycosylation sites follow: Asn-686 and Asn-773. CSPG repeat units follow at residues 784-882 and 902-993; these read TVWM…FRVT and NAPV…FVAT. Ser-999 carries O-linked (Xyl...) (chondroitin sulfate) serine glycosylation. CSPG repeat units lie at residues 1022 to 1114, 1130 to 1220, 1242 to 1341, 1360 to 1453, 1477 to 1567, 1585 to 1683, 1708 to 1807, 1836 to 1928, and 1945 to 2033; these read APVQ…VSDG, YLHV…LSVA, PLQL…LDVA, TVIP…LLAN, PPVI…LSDG, LLSL…LLLS, PSRL…FRAH, PPQP…MSDG, and TIEV…VLAL. Residues Asn-1135 and Asn-1206 are each glycosylated (N-linked (GlcNAc...) asparagine). 2 N-linked (GlcNAc...) asparagine glycosylation sites follow: Asn-1368 and Asn-1453. Residues 1590–2225 form a neurite growth inhibition region; it reads GSRKLTVCPE…SGFLGFLEAN (636 aa). Residues 1591–2225 form a cysteine-containing region; the sequence is SRKLTVCPES…SGFLGFLEAN (635 aa). Asn-1649 carries N-linked (GlcNAc...) asparagine glycosylation. N-linked (GlcNAc...) asparagine glycans are attached at residues Asn-1913, Asn-2020, Asn-2038, Asn-2044, and Asn-2079. The stretch at 2042–2151 is one CSPG 15 repeat; the sequence is TVNVTVQALL…TGDRLTLELQ (110 aa). The segment at 2187–2210 is disordered; it reads RTETEKTGKSTPTGQPGQAASSPM. Residues 2195–2210 show a composition bias toward polar residues; the sequence is KSTPTGQPGQAASSPM. A helical membrane pass occupies residues 2226-2250; sequence MFSVIIPVCLVLLLLALILPLLFYL. The Cytoplasmic portion of the chain corresponds to 2251-2326; the sequence is RKRNKTGKHD…PALRNGQYWV (76 aa). Thr-2256 is subject to Phosphothreonine; by PKC/PRKCA. Positions 2324–2326 match the PDZ-binding motif; sequence YWV.

Interacts with GRIP1, GRIP2 and GRIA2. Forms a ternary complex with GRIP1 and GRIA2. Interacts with ITGA4 through its chondroitin sulfate glycosaminoglycan. Interacts with BCAR1, CDC42 and ACK1. Interacts with MMP16. Interacts with the first PDZ domain of MPDZ. Interacts with PRKCA. Interacts with LGALS3 and the integrin composed of ITGB1 and ITGA3. Binds TNC, laminin-1, COL5A1 and COL6A2. Interacts with PLG and angiostatin. Binds FGF2 and PDGFA. In terms of processing, N-glycosylated. Post-translationally, O-glycosylated; contains glycosaminoglycan chondroitin sulfate which are required for proper localization and function in stress fiber formation. Involved in interaction with MMP16 and ITGA4. Phosphorylation by PRKCA regulates its subcellular location and function in cell motility. As to expression, neural cells and also extraneural tissues, especially in the developing mesenchyme.

It is found in the cell membrane. Its subcellular location is the apical cell membrane. The protein resides in the cell projection. The protein localises to the lamellipodium membrane. It localises to the cell surface. In terms of biological role, proteoglycan playing a role in cell proliferation and migration which stimulates endothelial cells motility during microvascular morphogenesis. May also inhibit neurite outgrowth and growth cone collapse during axon regeneration. Cell surface receptor for collagen alpha 2(VI) which may confer cells ability to migrate on that substrate. Binds through its extracellular N-terminus growth factors, extracellular matrix proteases modulating their activity. May regulate MPP16-dependent degradation and invasion of type I collagen participating in melanoma cells invasion properties. May modulate the plasminogen system by enhancing plasminogen activation and inhibiting angiostatin. Also functions as a signal transducing protein by binding through its cytoplasmic C-terminus scaffolding and signaling proteins. May promote retraction fiber formation and cell polarization through Rho GTPase activation. May stimulate alpha-4, beta-1 integrin-mediated adhesion and spreading by recruiting and activating a signaling cascade through CDC42, ACK1 and BCAR1. May activate FAK and ERK1/ERK2 signaling cascades. In Rattus norvegicus (Rat), this protein is Chondroitin sulfate proteoglycan 4 (Cspg4).